The following is a 1007-amino-acid chain: MGASVLPLGLGAGDCQSSSGRRMSACLPRTALSFLLSLLLATPGARAAGYETCPMVQPGMLNVHLVAHTHDDVGWLKTVDQYYWGIHNDLQQAGVQYILDSVISALLAEPTRRFVYVEMAFFSRWWHQQTNETQEVVRRLVRQGRLEFANGGWVMNDEAATHYGAIVDQMTLGLRFLEDTFGSDGRPRVAWHIDPFGHSREQASLFAQMGFDGVFFGRIDYQDKLVRKKRREMELVWRASASLKAPAADLFTGVLPNNYGPPEGLCWDVLCADPPVVDDPRSPEYNAKKLVSYFLQLATAQGRYYRTNHTVMTMGSDFQYENANTWFKNLDKLIQLVNMQQANGSRVHVLYSTPACYLWELNKANLTWPVKEDDFFPYADGPHMFWTGYFSSRPALKRYERLSYNFLQVCNQLEAQVGPAANVGPYGHGDSSPLNQAMAVLQHHDAVSGTSKQHVADDYARQLAAGWGPCEVLLSNALAKLSGSKETFLFCRDLNISICPFSQTSERFQVLVYNPLGRKVDRMVRLPVRKGLFLIKDPGNNTVPSTVVELTSSGNPELLFPALVPALGFSVYSVTRVSDQNPQTRSQHSRPQKYSSPVLSIKNEYLRASFHPDTGLLSMIEVLDRKLTLPVNQAFFWYNASVGDKRSSQASGAYIFRPSQQWPFPVSHLARTRLVKTALVQEVHQNFTAWCSQVVRLYSGQRHLELEWTVGPIPVGDKWGKEIISRFDTPLETGGVFFTDSNGREVLERRRDYRPSWKLNQTEPVAGNYYPVNSRIYITDGKMQLTVLTDRSQGGSSMSDGSLELMVHRRLLKDDGRGVGEALQEPGSGGWVRGRHLLLLDTAREAAAEHRLLAEKELLAPQLVLAPGQGPSYHHDHHEAVPRKQFSGLRRQLPPSVRLLTLARWGPDTLLLRLEHQFALGEDSSRNLSLPVTLDLQDLFSTFTITRLQETTLAANQLRASASRLKWTTEIDPISRPAVPRLDPSSITLQPMEIRTFVASVQWEENS.

The N-terminal stretch at 1–47 (MGASVLPLGLGAGDCQSSSGRRMSACLPRTALSFLLSLLLATPGARA) is a signal peptide. Intrachain disulfides connect cysteine 53-cysteine 356 and cysteine 266-cysteine 271. Zn(2+) is bound by residues histidine 70 and aspartate 72. Asparagine 131 carries N-linked (GlcNAc...) asparagine glycosylation. Aspartate 194 provides a ligand contact to Zn(2+). Catalysis depends on aspartate 194, which acts as the Nucleophile. Asparagine 308, asparagine 343, and asparagine 365 each carry an N-linked (GlcNAc...) asparagine glycan. 2 disulfide bridges follow: cysteine 410/cysteine 470 and cysteine 491/cysteine 499. Histidine 444 is a Zn(2+) binding site. Asparagine 495, asparagine 540, asparagine 639, asparagine 686, asparagine 760, and asparagine 927 each carry an N-linked (GlcNAc...) asparagine glycan.

This sequence belongs to the glycosyl hydrolase 38 family. It depends on Zn(2+) as a cofactor.

It is found in the lysosome. The enzyme catalyses Hydrolysis of terminal, non-reducing alpha-D-mannose residues in alpha-D-mannosides.. In terms of biological role, necessary for the catabolism of N-linked carbohydrates released during glycoprotein turnover. In Cavia porcellus (Guinea pig), this protein is Lysosomal alpha-mannosidase (MAN2B1).